We begin with the raw amino-acid sequence, 578 residues long: Proline--tRNA ligase (578 aa).

The protein belongs to the class-II aminoacyl-tRNA synthetase family. ProS type 1 subfamily. In terms of assembly, homodimer.

It localises to the cytoplasm. The catalysed reaction is tRNA(Pro) + L-proline + ATP = L-prolyl-tRNA(Pro) + AMP + diphosphate. Its function is as follows. Catalyzes the attachment of proline to tRNA(Pro) in a two-step reaction: proline is first activated by ATP to form Pro-AMP and then transferred to the acceptor end of tRNA(Pro). As ProRS can inadvertently accommodate and process non-cognate amino acids such as alanine and cysteine, to avoid such errors it has two additional distinct editing activities against alanine. One activity is designated as 'pretransfer' editing and involves the tRNA(Pro)-independent hydrolysis of activated Ala-AMP. The other activity is designated 'posttransfer' editing and involves deacylation of mischarged Ala-tRNA(Pro). The misacylated Cys-tRNA(Pro) is not edited by ProRS. The polypeptide is Proline--tRNA ligase (Burkholderia cenocepacia (strain ATCC BAA-245 / DSM 16553 / LMG 16656 / NCTC 13227 / J2315 / CF5610) (Burkholderia cepacia (strain J2315))).